A 270-amino-acid chain; its full sequence is Interleukin-1 alpha (270 aa).

Positions 1-114 (MAKVPDLFED…HDLEETIQPR (114 aa)) are excised as a propeptide. N-linked (GlcNAc...) asparagine glycosylation occurs at Asn-64. Lys-85 bears the N6-acetyllysine mark. The nuclear localization signal (NLS) stretch occupies residues 85 to 89 (KKRRL). Residue Ser-90 is modified to Phosphoserine. N-linked (GlcNAc...) asparagine glycosylation is found at Asn-139 and Asn-143.

This sequence belongs to the IL-1 family. As to quaternary structure, monomer. Interacts with TMED10; the interaction mediates the translocation from the cytoplasm into the ERGIC (endoplasmic reticulum-Golgi intermediate compartment) and thereby secretion. Interacts with IL1R1. Interacts with S100A13; this interaction is the first step in the export of IL1A, followed by direct translocation of this complex across the plasma membrane. Acetylated within its nuclear localization sequence, which impacts subcellular localization. In terms of processing, proteolytic processed by CAPN1 in a calcium-dependent manner. Cleavage from 31 kDa precursor to 18 kDa biologically active molecules. Post-translationally, phosphorylated. Phosphorylation greatly enhances susceptibility to digestion and promotes the conversion of pre-IL1A alpha to the biologically active IL1A.

It is found in the nucleus. The protein resides in the cytoplasm. The protein localises to the secreted. Its function is as follows. Cytokine constitutively present intracellularly in nearly all resting non-hematopoietic cells that plays an important role in inflammation and bridges the innate and adaptive immune systems. After binding to its receptor IL1R1 together with its accessory protein IL1RAP, forms the high affinity interleukin-1 receptor complex. Signaling involves the recruitment of adapter molecules such as MYD88, IRAK1 or IRAK4. In turn, mediates the activation of NF-kappa-B and the three MAPK pathways p38, p42/p44 and JNK pathways. Within the cell, acts as an alarmin and cell death results in its liberation in the extracellular space after disruption of the cell membrane to induce inflammation and alert the host to injury or damage. In addition to its role as a danger signal, which occurs when the cytokine is passively released by cell necrosis, directly senses DNA damage and acts as a signal for genotoxic stress without loss of cell integrity. The chain is Interleukin-1 alpha from Mus musculus (Mouse).